The sequence spans 308 residues: GMP synthase [glutamine-hydrolyzing] subunit B (308 aa).

One can recognise a GMPS ATP-PPase domain in the interval 2–183 (LNPSDFIEEA…LGLPREMIQR (182 aa)). 29-35 (SGGVDSS) provides a ligand contact to ATP.

As to quaternary structure, heterodimer composed of a glutamine amidotransferase subunit (A) and a GMP-binding subunit (B).

It catalyses the reaction XMP + L-glutamine + ATP + H2O = GMP + L-glutamate + AMP + diphosphate + 2 H(+). It participates in purine metabolism; GMP biosynthesis; GMP from XMP (L-Gln route): step 1/1. In terms of biological role, catalyzes the synthesis of GMP from XMP. The chain is GMP synthase [glutamine-hydrolyzing] subunit B (guaAB) from Methanothermobacter thermautotrophicus (strain ATCC 29096 / DSM 1053 / JCM 10044 / NBRC 100330 / Delta H) (Methanobacterium thermoautotrophicum).